We begin with the raw amino-acid sequence, 130 residues long: Small ribosomal subunit protein uS8 (130 aa).

Belongs to the universal ribosomal protein uS8 family.

The sequence is that of Small ribosomal subunit protein uS8 (RPS22A) from Eremothecium gossypii (strain ATCC 10895 / CBS 109.51 / FGSC 9923 / NRRL Y-1056) (Yeast).